The sequence spans 286 residues: NADPH-dependent 7-cyano-7-deazaguanine reductase (286 aa).

88-90 (VES) is a substrate binding site. 90-91 (SK) serves as a coordination point for NADPH. Catalysis depends on cysteine 194, which acts as the Thioimide intermediate. The active-site Proton donor is the aspartate 201. 233 to 234 (HE) contributes to the substrate binding site. Residue 262 to 263 (RG) coordinates NADPH.

The protein belongs to the GTP cyclohydrolase I family. QueF type 2 subfamily. As to quaternary structure, homodimer.

The protein resides in the cytoplasm. The catalysed reaction is 7-aminomethyl-7-carbaguanine + 2 NADP(+) = 7-cyano-7-deazaguanine + 2 NADPH + 3 H(+). Its pathway is tRNA modification; tRNA-queuosine biosynthesis. In terms of biological role, catalyzes the NADPH-dependent reduction of 7-cyano-7-deazaguanine (preQ0) to 7-aminomethyl-7-deazaguanine (preQ1). This Colwellia psychrerythraea (strain 34H / ATCC BAA-681) (Vibrio psychroerythus) protein is NADPH-dependent 7-cyano-7-deazaguanine reductase.